Here is a 216-residue protein sequence, read N- to C-terminus: Pentapeptide repeat protein VPA0095 (216 aa).

The protein belongs to the pentapeptide repeat protein family.

Functionally, has no effect when overexpressed in E.coli. When Cys-115 is mutated to Tyr and overexpressed it increases (fluoro)quinolone resistance in E.coli up to 16-fold for ciprofloxacin, levofloxacin and nalidixic acid. This Vibrio parahaemolyticus serotype O3:K6 (strain RIMD 2210633) protein is Pentapeptide repeat protein VPA0095.